The chain runs to 339 residues: Serine/threonine-protein kinase SRK2J (339 aa).

The Protein kinase domain occupies 4–260 (YEMVKDLGFG…LKEIKSHAWF (257 aa)). ATP is bound by residues 10 to 18 (LGFGNFGLA) and Lys-33. The active-site Proton acceptor is the Asp-123. The disordered stretch occupies residues 308–339 (SRPVESLGSDKKDDDEEEYLDANDEEWYDDYA). The span at 320-339 (DDDEEEYLDANDEEWYDDYA) shows a compositional bias: acidic residues.

The protein belongs to the protein kinase superfamily. Ser/Thr protein kinase family. As to expression, expressed in seedlings.

It carries out the reaction L-seryl-[protein] + ATP = O-phospho-L-seryl-[protein] + ADP + H(+). It catalyses the reaction L-threonyl-[protein] + ATP = O-phospho-L-threonyl-[protein] + ADP + H(+). The chain is Serine/threonine-protein kinase SRK2J (SRK2J) from Arabidopsis thaliana (Mouse-ear cress).